Here is a 194-residue protein sequence, read N- to C-terminus: FMN-dependent NADH:quinone oxidoreductase (194 aa).

Residues Ser9, 15-17 (SIS), and 85-88 (MYNF) each bind FMN.

Belongs to the azoreductase type 1 family. As to quaternary structure, homodimer. FMN serves as cofactor.

It carries out the reaction 2 a quinone + NADH + H(+) = 2 a 1,4-benzosemiquinone + NAD(+). It catalyses the reaction N,N-dimethyl-1,4-phenylenediamine + anthranilate + 2 NAD(+) = 2-(4-dimethylaminophenyl)diazenylbenzoate + 2 NADH + 2 H(+). Functionally, quinone reductase that provides resistance to thiol-specific stress caused by electrophilic quinones. Also exhibits azoreductase activity. Catalyzes the reductive cleavage of the azo bond in aromatic azo compounds to the corresponding amines. This Xanthomonas oryzae pv. oryzae (strain KACC10331 / KXO85) protein is FMN-dependent NADH:quinone oxidoreductase.